A 529-amino-acid chain; its full sequence is GMP synthase [glutamine-hydrolyzing] (529 aa).

The Glutamine amidotransferase type-1 domain occupies 9-211; the sequence is RILILDFGSQ…VKDICGCECL (203 aa). Cysteine 86 acts as the Nucleophile in catalysis. Active-site residues include histidine 185 and glutamate 187. The 193-residue stretch at 212–404 folds into the GMPS ATP-PPase domain; that stretch reads WTPATIIDDA…LGLPYDMLYR (193 aa). 239–245 lines the ATP pocket; sequence SGGVDSS.

Homodimer.

It carries out the reaction XMP + L-glutamine + ATP + H2O = GMP + L-glutamate + AMP + diphosphate + 2 H(+). It functions in the pathway purine metabolism; GMP biosynthesis; GMP from XMP (L-Gln route): step 1/1. In terms of biological role, catalyzes the synthesis of GMP from XMP. The protein is GMP synthase [glutamine-hydrolyzing] of Aeromonas hydrophila subsp. hydrophila (strain ATCC 7966 / DSM 30187 / BCRC 13018 / CCUG 14551 / JCM 1027 / KCTC 2358 / NCIMB 9240 / NCTC 8049).